The primary structure comprises 193 residues: Der GTPase-activating protein YihI (193 aa).

The span at 1–12 (MSAKQPNRKPTG) shows a compositional bias: basic residues. Disordered regions lie at residues 1–91 (MSAK…KLVM) and 143–193 (IIDN…PKKK). Basic and acidic residues predominate over residues 13–26 (KRKESDASALDGRE). The segment covering 27–36 (RKRAAKRKGL) has biased composition (basic residues). Over residues 40–54 (SRQQAEQSSKNNNGK) the composition is skewed to polar residues. The span at 145–160 (DNDDDEEDDGSFDDAS) shows a compositional bias: acidic residues. A compositionally biased stretch (basic and acidic residues) spans 184-193 (PEPKPEPKKK).

This sequence belongs to the YihI family. As to quaternary structure, interacts with Der.

Functionally, a GTPase-activating protein (GAP) that modifies Der/EngA GTPase function. May play a role in ribosome biogenesis. The protein is Der GTPase-activating protein YihI of Aeromonas salmonicida (strain A449).